Consider the following 1279-residue polypeptide: ATP-dependent helicase/nuclease subunit A (1279 aa).

Positions 4–499 (TKWTDEQRQA…VKLFKNFRSR (496 aa)) constitute a UvrD-like helicase ATP-binding domain. 25 to 32 (AGAGAGKT) serves as a coordination point for ATP. Residues 526-853 (EEALKVGASY…RIMSIHKSKG (328 aa)) enclose the UvrD-like helicase C-terminal domain.

Belongs to the helicase family. AddA subfamily. Heterodimer of AddA and AddB/RexB. Requires Mg(2+) as cofactor.

The enzyme catalyses Couples ATP hydrolysis with the unwinding of duplex DNA by translocating in the 3'-5' direction.. It carries out the reaction ATP + H2O = ADP + phosphate + H(+). Its function is as follows. The heterodimer acts as both an ATP-dependent DNA helicase and an ATP-dependent, dual-direction single-stranded exonuclease. Recognizes the chi site generating a DNA molecule suitable for the initiation of homologous recombination. The AddA nuclease domain is required for chi fragment generation; this subunit has the helicase and 3' -&gt; 5' nuclease activities. The polypeptide is ATP-dependent helicase/nuclease subunit A (Clostridium botulinum (strain Okra / Type B1)).